We begin with the raw amino-acid sequence, 479 residues long: Kynurenine 3-monooxygenase (479 aa).

The protein belongs to the aromatic-ring hydroxylase family. KMO subfamily. Requires FAD as cofactor.

The protein resides in the mitochondrion outer membrane. The enzyme catalyses L-kynurenine + NADPH + O2 + H(+) = 3-hydroxy-L-kynurenine + NADP(+) + H2O. Its pathway is cofactor biosynthesis; NAD(+) biosynthesis; quinolinate from L-kynurenine: step 1/3. Functionally, catalyzes the hydroxylation of L-kynurenine (L-Kyn) to form 3-hydroxy-L-kynurenine (L-3OHKyn). Required for synthesis of quinolinic acid. The polypeptide is Kynurenine 3-monooxygenase (Chaetomium globosum (strain ATCC 6205 / CBS 148.51 / DSM 1962 / NBRC 6347 / NRRL 1970) (Soil fungus)).